We begin with the raw amino-acid sequence, 377 residues long: UPF0754 membrane protein lin2327 (377 aa).

A run of 2 helical transmembrane segments spans residues 1–21 (MSVL…GAMT) and 357–377 (YLGG…AMWI).

The protein belongs to the UPF0754 family.

The protein resides in the cell membrane. This chain is UPF0754 membrane protein lin2327, found in Listeria innocua serovar 6a (strain ATCC BAA-680 / CLIP 11262).